The following is a 971-amino-acid chain: 116 kDa U5 small nuclear ribonucleoprotein component (971 aa).

An N-acetylmethionine modification is found at Met1. The tract at residues 1–52 (MDTDLYDEFGNYIGPELDSDEDDDELGRETKDLDEDEDEDEDDVGEHEDDHP) is disordered. Residues 17-47 (LDSDEDDDELGRETKDLDEDEDEDEDDVGEH) show a composition bias toward acidic residues. Residue Ser19 is modified to Phosphoserine. A Glycyl lysine isopeptide (Lys-Gly) (interchain with G-Cter in SUMO1); alternate cross-link involves residue Lys63. Lys63 participates in a covalent cross-link: Glycyl lysine isopeptide (Lys-Gly) (interchain with G-Cter in SUMO2); alternate. Thr85 carries the phosphothreonine modification. Positions 126-408 (ELIRNVTLCG…GIHLTKEELK (283 aa)) constitute a tr-type G domain. GTP is bound by residues 135–142 (GHLHHGKT), 203–207 (DTPGH), and 257–260 (NKID).

The protein belongs to the TRAFAC class translation factor GTPase superfamily. Classic translation factor GTPase family. EF-G/EF-2 subfamily. Component of the U5 snRNP and the U4/U6-U5 tri-snRNP complex, a building block of the spliceosome. The U4/U6-U5 tri-snRNP complex is composed of the U4, U6 and U5 snRNAs and at least PRPF3, PRPF4, PRPF6, PRPF8, PRPF31, SNRNP200, TXNL4A, SNRNP40, DDX23, CD2BP2, PPIH, SNU13, EFTUD2, SART1 and USP39. Component of the pre-catalytic, catalytic and post-catalytic spliceosome complexes. Component of the minor spliceosome, which splices U12-type introns. Within this complex, interacts with CRIPT. Interacts with ERBB4 and PRPF8. Interacts with PIH1D1. Interacts with RPAP3 and URI1 in a ZNHIT2-dependent manner. Interacts with NRDE2. Interacts with FAM50A. Interacts with UBL5.

The protein localises to the nucleus. Functionally, required for pre-mRNA splicing as component of the spliceosome, including pre-catalytic, catalytic and post-catalytic spliceosomal complexes. Component of the U5 snRNP and the U4/U6-U5 tri-snRNP complex, a building block of the spliceosome. As a component of the minor spliceosome, involved in the splicing of U12-type introns in pre-mRNAs. The chain is 116 kDa U5 small nuclear ribonucleoprotein component (Eftud2) from Mus musculus (Mouse).